A 292-amino-acid polypeptide reads, in one-letter code: MIVASILILIVPVLLSVAMFTLAERTVMASMQRRFGPQVSGISGLLQPFWDGLKLGVKEPVLPDSSSAGAFAASPMISFVLSQVAWVGICISDASFQGLVIMAISSLAVYGVMLAGWASNSKYAFLGCLRSVALMVSYELSLGAALLSIGLFVTDGTGMKCLNFAEMPTTPQYAMLPLCLIFLVCILAETKRDPFDLPEAELVAGYNVEYSSLGFALFFIAEYANMAVMSAIASIYFLGGFSALKITALFFAFVWTRGTLPRYRYDQFMRLGWKAFLPLTLAFFALHASVAI.

8 helical membrane passes run 2-22 (IVASILILIVPVLLSVAMFTL), 71-91 (FAASPMISFVLSQVAWVGICI), 98-118 (GLVIMAISSLAVYGVMLAGWA), 132-152 (VALMVSYELSLGAALLSIGLF), 167-187 (MPTTPQYAMLPLCLIFLVCIL), 213-233 (LGFALFFIAEYANMAVMSAIA), 235-255 (IYFLGGFSALKITALFFAFVW), and 272-292 (GWKAFLPLTLAFFALHASVAI).

The protein belongs to the complex I subunit 1 family.

The protein resides in the mitochondrion inner membrane. It catalyses the reaction a ubiquinone + NADH + 5 H(+)(in) = a ubiquinol + NAD(+) + 4 H(+)(out). In terms of biological role, core subunit of the mitochondrial membrane respiratory chain NADH dehydrogenase (Complex I) that is believed to belong to the minimal assembly required for catalysis. Complex I functions in the transfer of electrons from NADH to the respiratory chain. The immediate electron acceptor for the enzyme is believed to be ubiquinone. The protein is NADH-ubiquinone oxidoreductase chain 1 (ND1) of Chlamydomonas reinhardtii (Chlamydomonas smithii).